The following is a 612-amino-acid chain: Sulfite reductase [NADPH] hemoprotein beta-component (612 aa).

The interval 1-32 (MDDHKPIDTPDGPAVDTPGIGAHRYEAPPTDR) is disordered. 4 residues coordinate [4Fe-4S] cluster: Cys469, Cys475, Cys514, and Cys518. Cys518 is a binding site for siroheme.

It belongs to the nitrite and sulfite reductase 4Fe-4S domain family. As to quaternary structure, alpha(8)-beta(8). The alpha component is a flavoprotein, the beta component is a hemoprotein. It depends on siroheme as a cofactor. Requires [4Fe-4S] cluster as cofactor.

It catalyses the reaction hydrogen sulfide + 3 NADP(+) + 3 H2O = sulfite + 3 NADPH + 4 H(+). It functions in the pathway sulfur metabolism; hydrogen sulfide biosynthesis; hydrogen sulfide from sulfite (NADPH route): step 1/1. Functionally, component of the sulfite reductase complex that catalyzes the 6-electron reduction of sulfite to sulfide. This is one of several activities required for the biosynthesis of L-cysteine from sulfate. The chain is Sulfite reductase [NADPH] hemoprotein beta-component from Methylorubrum populi (strain ATCC BAA-705 / NCIMB 13946 / BJ001) (Methylobacterium populi).